A 187-amino-acid chain; its full sequence is Elongation factor P (187 aa).

The protein belongs to the elongation factor P family.

Its subcellular location is the cytoplasm. It participates in protein biosynthesis; polypeptide chain elongation. Involved in peptide bond synthesis. Stimulates efficient translation and peptide-bond synthesis on native or reconstituted 70S ribosomes in vitro. Probably functions indirectly by altering the affinity of the ribosome for aminoacyl-tRNA, thus increasing their reactivity as acceptors for peptidyl transferase. This is Elongation factor P from Rhodospirillum rubrum (strain ATCC 11170 / ATH 1.1.1 / DSM 467 / LMG 4362 / NCIMB 8255 / S1).